The following is a 305-amino-acid chain: Methionyl-tRNA formyltransferase (305 aa).

Residue 111 to 114 coordinates (6S)-5,6,7,8-tetrahydrofolate; sequence SLLP.

This sequence belongs to the Fmt family.

It catalyses the reaction L-methionyl-tRNA(fMet) + (6R)-10-formyltetrahydrofolate = N-formyl-L-methionyl-tRNA(fMet) + (6S)-5,6,7,8-tetrahydrofolate + H(+). Attaches a formyl group to the free amino group of methionyl-tRNA(fMet). The formyl group appears to play a dual role in the initiator identity of N-formylmethionyl-tRNA by promoting its recognition by IF2 and preventing the misappropriation of this tRNA by the elongation apparatus. The chain is Methionyl-tRNA formyltransferase from Helicobacter pylori (strain J99 / ATCC 700824) (Campylobacter pylori J99).